Here is a 243-residue protein sequence, read N- to C-terminus: Probable transcriptional regulatory protein BDU_30 (243 aa).

The protein belongs to the TACO1 family.

The protein localises to the cytoplasm. This Borrelia duttonii (strain Ly) protein is Probable transcriptional regulatory protein BDU_30.